A 474-amino-acid polypeptide reads, in one-letter code: TOM1-like protein 1 (474 aa).

A VHS domain is found at 22–154; that stretch reads ATFAGVLTED…DLLKKGVQFP (133 aa). Positions 153–180 are disordered; the sequence is FPPSDGEPETRQEAGQISPNRPTSVPTA. Residues 165–178 are compositionally biased toward polar residues; that stretch reads EAGQISPNRPTSVP. Phosphoserine is present on Ser-170. Residues 199–287 enclose the GAT domain; that stretch reads EQIGKLHSEL…AVLGYERFTR (89 aa). Residues 291 to 317 are disordered; that stretch reads RLLEQKRNRTEATRTSSEPSAPSCDLL. A compositionally biased stretch (basic and acidic residues) spans 293-302; sequence LEQKRNRTEA. Ser-313 and Ser-320 each carry phosphoserine. Residues 392–395 are interaction with GRB2; sequence YDNF. An SH3-binding motif is present at residues 420-424; the sequence is LPPLP. An interaction with PIK3R1 region spans residues 441–444; it reads YEVM. Position 457 is a phosphotyrosine (Tyr-457). The SH2-binding motif lies at 457–460; that stretch reads YEEI.

This sequence belongs to the TOM1 family. Interacts with LYN. Interacts with the SH2 and SH3 domains of FYN when phosphorylated. Also interacts with GRB2 and PIK3R1 when phosphorylated. In terms of processing, phosphorylated on tyrosines by LYN. Phosphorylated on tyrosines by FYN. Strongly expressed in brain and kidney, expressed at intermediate levels skin and heart, and weakly expressed in thymus. Not expressed in liver and spleen.

The protein resides in the golgi apparatus. It is found in the golgi stack. It localises to the endosome membrane. Its subcellular location is the cytoplasm. The protein localises to the membrane. Its function is as follows. Probable adapter protein involved in signaling pathways. Interacts with the SH2 and SH3 domains of various signaling proteins when it is phosphorylated. May promote FYN activation, possibly by disrupting intramolecular SH3-dependent interactions. This is TOM1-like protein 1 (Tom1l1) from Mus musculus (Mouse).